Reading from the N-terminus, the 359-residue chain is Protein-glutamate methylesterase/protein-glutamine glutaminase 2 (359 aa).

The Response regulatory domain occupies 6–123 (KVMIVDDSAL…KSFLEDASND (118 aa)). A 4-aspartylphosphate modification is found at Asp57. Positions 167 to 359 (ERTTDQLVAI…GAIVGYGKSC (193 aa)) constitute a CheB-type methylesterase domain. Residues Ser179, His205, and Asp301 contribute to the active site.

The protein belongs to the CheB family. In terms of processing, phosphorylated by CheA. Phosphorylation of the N-terminal regulatory domain activates the methylesterase activity.

Its subcellular location is the cytoplasm. The catalysed reaction is [protein]-L-glutamate 5-O-methyl ester + H2O = L-glutamyl-[protein] + methanol + H(+). It catalyses the reaction L-glutaminyl-[protein] + H2O = L-glutamyl-[protein] + NH4(+). Its function is as follows. Involved in chemotaxis. Part of a chemotaxis signal transduction system that modulates chemotaxis in response to various stimuli. Catalyzes the demethylation of specific methylglutamate residues introduced into the chemoreceptors (methyl-accepting chemotaxis proteins or MCP) by CheR. Also mediates the irreversible deamidation of specific glutamine residues to glutamic acid. This chain is Protein-glutamate methylesterase/protein-glutamine glutaminase 2, found in Dechloromonas aromatica (strain RCB).